A 484-amino-acid polypeptide reads, in one-letter code: Glutamate--tRNA ligase (484 aa).

Positions 11–21 (PSPTGYLHIGN) match the 'HIGH' region motif. Positions 252–256 (KLSKR) match the 'KMSKS' region motif. Lys-255 is an ATP binding site.

This sequence belongs to the class-I aminoacyl-tRNA synthetase family. Glutamate--tRNA ligase type 1 subfamily. In terms of assembly, monomer.

It localises to the cytoplasm. It carries out the reaction tRNA(Glu) + L-glutamate + ATP = L-glutamyl-tRNA(Glu) + AMP + diphosphate. In terms of biological role, catalyzes the attachment of glutamate to tRNA(Glu) in a two-step reaction: glutamate is first activated by ATP to form Glu-AMP and then transferred to the acceptor end of tRNA(Glu). In Staphylococcus haemolyticus (strain JCSC1435), this protein is Glutamate--tRNA ligase.